Reading from the N-terminus, the 322-residue chain is Chemokine XC receptor 1 (322 aa).

Topologically, residues 1 to 27 are extracellular; it reads MESSTAFYDYHDKLSLLCENNVIFFST. A helical transmembrane segment spans residues 28 to 55; sequence ISTIVLYSLVFLLSLVGNSLVLWVLVKY. Topologically, residues 56–65 are cytoplasmic; the sequence is ENLESLTNIF. Residues 66 to 85 traverse the membrane as a helical segment; the sequence is ILNLCLSDLMFSCLLPVLIS. The Extracellular segment spans residues 86-98; sequence AQWSWFLGDFFCK. An intrachain disulfide couples Cys97 to Cys170. A helical transmembrane segment spans residues 99 to 120; the sequence is FFNMIFGISLYSSIFFLTIMTI. Over 121–137 the chain is Cytoplasmic; sequence HRYLSVVSPISTLGIHT. A helical membrane pass occupies residues 138–162; the sequence is LRCRVLVTSCVWAASILFSIPDAVF. Over 163–185 the chain is Extracellular; sequence HKVISLNCKYSEHHGFLASVYQH. The chain crosses the membrane as a helical span at residues 186–204; it reads NIFFLLSMGIILFCYVQIL. Residues 205 to 220 lie on the Cytoplasmic side of the membrane; the sequence is RTLFRTRSRQRHRTVR. Residues 221 to 243 form a helical membrane-spanning segment; it reads LIFTVVVAYFLSWAPYNLTLFLK. The Extracellular portion of the chain corresponds to 244–259; that stretch reads TGIIQQSCESLQQLDI. Residues 260–283 form a helical membrane-spanning segment; that stretch reads AMIICRHLAFSHCCFNPVLYVFVG. The Cytoplasmic segment spans residues 284–322; it reads IKFRRHLKHLFQQVWLCRKTSSTVPCSPGTFTYEGPSFY.

It belongs to the G-protein coupled receptor 1 family. As to expression, expressed by dendritic cells from the thymus, slpeen, subcutaneous lymph nodes and mesenteric lymph nodes.

The protein resides in the cell membrane. Receptor for chemokines SCYC1 and SCYC2. Subsequently transduces a signal by increasing the intracellular calcium ions level. Receptor for XCL1/Lymphotactin. The protein is Chemokine XC receptor 1 (Xcr1) of Mus musculus (Mouse).